The sequence spans 201 residues: tRNA (guanine-N(7)-)-methyltransferase (201 aa).

S-adenosyl-L-methionine-binding residues include E33, E58, D85, and D106. Residue D106 is part of the active site. Residues K110, D142, and 180–183 each bind substrate; that span reads TTYE.

This sequence belongs to the class I-like SAM-binding methyltransferase superfamily. TrmB family.

The enzyme catalyses guanosine(46) in tRNA + S-adenosyl-L-methionine = N(7)-methylguanosine(46) in tRNA + S-adenosyl-L-homocysteine. It participates in tRNA modification; N(7)-methylguanine-tRNA biosynthesis. Functionally, catalyzes the formation of N(7)-methylguanine at position 46 (m7G46) in tRNA. The chain is tRNA (guanine-N(7)-)-methyltransferase from Mesomycoplasma hyopneumoniae (strain J / ATCC 25934 / NCTC 10110) (Mycoplasma hyopneumoniae).